Reading from the N-terminus, the 378-residue chain is Probable 3-hydroxyisobutyryl-CoA hydrolase 2 (378 aa).

Substrate is bound by residues Gly-115, Glu-138, and Asp-146. The Microbody targeting signal signature appears at 376 to 378 (AKL).

This sequence belongs to the enoyl-CoA hydratase/isomerase family.

The protein localises to the peroxisome. It carries out the reaction 3-hydroxy-2-methylpropanoyl-CoA + H2O = 3-hydroxy-2-methylpropanoate + CoA + H(+). Its pathway is amino-acid degradation; L-valine degradation. Functionally, involved in valine catabolism. The polypeptide is Probable 3-hydroxyisobutyryl-CoA hydrolase 2 (Arabidopsis thaliana (Mouse-ear cress)).